The following is a 96-amino-acid chain: UPF0235 protein YPK_0828 (96 aa).

Belongs to the UPF0235 family.

In Yersinia pseudotuberculosis serotype O:3 (strain YPIII), this protein is UPF0235 protein YPK_0828.